Consider the following 127-residue polypeptide: MGVLLFLYDPTCQRAYLIVSLVFQCSIYTTIISHNSCPQRFTGIFINQNASSISECNGGAILSAHVTLFRPYDNCVTNITFFDTVGVGCPRNVLSQGLCFLYNTDYSVSNHCRTLGGPFPYYFNTFC.

This is an uncharacterized protein from Saccharomyces cerevisiae (strain ATCC 204508 / S288c) (Baker's yeast).